The primary structure comprises 190 residues: Putative manganese efflux pump MntP (190 aa).

The next 6 helical transmembrane spans lie at 3–23, 41–61, 69–89, 105–125, 133–153, and 168–188; these read PISL…AALG, LIFG…GQVA, DHWI…YNGL, FWIL…VGVG, IMVA…IGVM, and IVGG…HLTA.

Belongs to the MntP (TC 9.B.29) family.

It localises to the cell inner membrane. In terms of biological role, probably functions as a manganese efflux pump. This chain is Putative manganese efflux pump MntP, found in Pseudomonas syringae pv. tomato (strain ATCC BAA-871 / DC3000).